A 651-amino-acid polypeptide reads, in one-letter code: MSGELNGNDTSVQAAVSAGSVLEGAAFADEGEQHNESMKTLVLGALGVVYGDIGTSPIYAFREALHAAATNGILARSDILGVVSFIFWALTLVVTVKYVLFVLRADNNGEGGILSLMALVRGALKGRPDLILGVGICGAALFFGDAVITPAISVLSAMEGLEIVAPNLTPFVVPATVVILVTLFSVQKLGTGRVAIVFGPIMALWFVALGASGLWHIFDDPTVMAALNPYYAVRFLTVSPAVAFVTVGAVFLAMTGAEALYADLGHFGRKPIVRAWLWIVFPCLLLNYFGQAAFILSHGEAAALPFFQMIPSFALWPMVLLATAATVIASQAVITGAYSVARQAVQLNILPRLEIQHTSEKLHGQIYIPRVNLLLGLAVVILVLGFEKSSNLAAAYGIAVTGNMLVTTVLLYIVMTRIWNWRVSRALPIILGFLVIDMLFFSANIIKVHEGGWASIGIATVLVLIMWTWVRGTRHLFQKTRKAEVPLDLIVEQMAKRPPTIVPGTAVFLTGDPKSAPTALMHSLKHYKVLHENNVILTVVTASKPWVALADRARVSQYNERFMLVTLTFGYMQQPNIPRALGLCRRLGWKFDIMTTSFFLSRRSLKASVHSGMPLWQDKLFILLARTASDATEYFQIPTGRVVEIGTQVNI.

12 helical membrane passes run 41–61, 82–102, 130–150, 163–183, 194–214, 235–255, 276–296, 309–329, 366–386, 395–415, 426–446, and 450–470; these read LVLGALGVVYGDIGTSPIYAF, VVSFIFWALTLVVTVKYVLFV, LILGVGICGAALFFGDAVITP, IVAPNLTPFVVPATVVILVTL, VAIVFGPIMALWFVALGASGL, FLTVSPAVAFVTVGAVFLAMT, WLWIVFPCLLLNYFGQAAFIL, MIPSFALWPMVLLATAATVIA, IYIPRVNLLLGLAVVILVLGF, AYGIAVTGNMLVTTVLLYIVM, ALPIILGFLVIDMLFFSANII, and EGGWASIGIATVLVLIMWTWV.

This sequence belongs to the HAK/KUP transporter (TC 2.A.72) family.

The protein resides in the cell inner membrane. The catalysed reaction is K(+)(in) + H(+)(in) = K(+)(out) + H(+)(out). Functionally, transport of potassium into the cell. Likely operates as a K(+):H(+) symporter. The chain is Probable potassium transport system protein Kup from Brucella ovis (strain ATCC 25840 / 63/290 / NCTC 10512).